The sequence spans 151 residues: UPF0178 protein YaiI (151 aa).

It belongs to the UPF0178 family.

In Salmonella enteritidis PT4 (strain P125109), this protein is UPF0178 protein YaiI.